Consider the following 299-residue polypeptide: Bifunctional protein FolD (299 aa).

NADP(+)-binding positions include 166-168 (GRS), Ser-191, and Ile-232.

It belongs to the tetrahydrofolate dehydrogenase/cyclohydrolase family. Homodimer.

The enzyme catalyses (6R)-5,10-methylene-5,6,7,8-tetrahydrofolate + NADP(+) = (6R)-5,10-methenyltetrahydrofolate + NADPH. It catalyses the reaction (6R)-5,10-methenyltetrahydrofolate + H2O = (6R)-10-formyltetrahydrofolate + H(+). It functions in the pathway one-carbon metabolism; tetrahydrofolate interconversion. Functionally, catalyzes the oxidation of 5,10-methylenetetrahydrofolate to 5,10-methenyltetrahydrofolate and then the hydrolysis of 5,10-methenyltetrahydrofolate to 10-formyltetrahydrofolate. The polypeptide is Bifunctional protein FolD (Dinoroseobacter shibae (strain DSM 16493 / NCIMB 14021 / DFL 12)).